Reading from the N-terminus, the 275-residue chain is Esterase AAEL000016 (275 aa).

A disordered region spans residues 1–21; it reads MMANETAAKSTKSSPTPAVEP. Residues 7-16 show a composition bias toward polar residues; sequence AAKSTKSSPT. Active-site charge relay system residues include serine 129, aspartate 187, and histidine 214. The disordered stretch occupies residues 253–275; the sequence is LVDDSGPAGNGVHDDDDDDDDSD. A compositionally biased stretch (acidic residues) spans 266–275; it reads DDDDDDDDSD.

The protein belongs to the LovG family.

In Aedes aegypti (Yellowfever mosquito), this protein is Esterase AAEL000016.